Here is a 325-residue protein sequence, read N- to C-terminus: NADH-quinone oxidoreductase subunit H (325 aa).

Transmembrane regions (helical) follow at residues I11–F31, V81–V101, I114–G134, L154–F174, V186–V206, F237–F257, L265–I285, and I304–A324.

It belongs to the complex I subunit 1 family. NDH-1 is composed of 13 different subunits. Subunits NuoA, H, J, K, L, M, N constitute the membrane sector of the complex.

It is found in the cell inner membrane. The enzyme catalyses a quinone + NADH + 5 H(+)(in) = a quinol + NAD(+) + 4 H(+)(out). In terms of biological role, NDH-1 shuttles electrons from NADH, via FMN and iron-sulfur (Fe-S) centers, to quinones in the respiratory chain. The immediate electron acceptor for the enzyme in this species is believed to be ubiquinone. Couples the redox reaction to proton translocation (for every two electrons transferred, four hydrogen ions are translocated across the cytoplasmic membrane), and thus conserves the redox energy in a proton gradient. This subunit may bind ubiquinone. The polypeptide is NADH-quinone oxidoreductase subunit H (Escherichia coli O45:K1 (strain S88 / ExPEC)).